Consider the following 528-residue polypeptide: J domain-containing protein APJ1 (528 aa).

The J domain occupies 4 to 73 (NTSLYDSLNV…RALYDQYGTT (70 aa)). The segment at 193–274 (GKTAKLGLNR…CQGLGFIKER (82 aa)) adopts a CR-type zinc-finger fold. CXXCXGXG motif repeat units follow at residues 206–213 (CSVCDGHG), 218–225 (CTCKTCKG), 246–253 (CADCGGAG), and 262–269 (CQQCQGLG). Positions 485-499 (NERDSRKRNNRRFDE) are enriched in basic and acidic residues. The tract at residues 485 to 528 (NERDSRKRNNRRFDESNINNNNETKRNKYSSPVSGFYDHDINGY) is disordered.

Its subcellular location is the cytoplasm. The protein localises to the nucleus. In terms of biological role, putative chaperone involved in protein folding. Interferes with propagation of [PSI+] prion when overproduced. This is J domain-containing protein APJ1 (APJ1) from Saccharomyces cerevisiae (strain ATCC 204508 / S288c) (Baker's yeast).